Reading from the N-terminus, the 461-residue chain is tRNA modification GTPase MnmE (461 aa).

(6S)-5-formyl-5,6,7,8-tetrahydrofolate is bound by residues Arg-21, Glu-87, and Lys-126. Residues 222–384 (QSTVVLYGEP…LLELLKSKLT (163 aa)) enclose the TrmE-type G domain. A K(+)-binding site is contributed by Asn-232. GTP is bound by residues 232-237 (NTGKSS), 251-257 (SDVPGTT), and 276-279 (DTAG). Mg(2+) is bound at residue Ser-236. 3 residues coordinate K(+): Ser-251, Val-253, and Thr-256. A Mg(2+)-binding site is contributed by Thr-257. A (6S)-5-formyl-5,6,7,8-tetrahydrofolate-binding site is contributed by Lys-461.

Belongs to the TRAFAC class TrmE-Era-EngA-EngB-Septin-like GTPase superfamily. TrmE GTPase family. In terms of assembly, homodimer. Heterotetramer of two MnmE and two MnmG subunits. K(+) serves as cofactor.

The protein resides in the cytoplasm. Exhibits a very high intrinsic GTPase hydrolysis rate. Involved in the addition of a carboxymethylaminomethyl (cmnm) group at the wobble position (U34) of certain tRNAs, forming tRNA-cmnm(5)s(2)U34. This chain is tRNA modification GTPase MnmE, found in Leptospira biflexa serovar Patoc (strain Patoc 1 / Ames).